Here is a 258-residue protein sequence, read N- to C-terminus: Imidazole glycerol phosphate synthase subunit HisF (258 aa).

Residues Asp-11 and Asp-130 contribute to the active site.

Belongs to the HisA/HisF family. As to quaternary structure, heterodimer of HisH and HisF.

It is found in the cytoplasm. The catalysed reaction is 5-[(5-phospho-1-deoxy-D-ribulos-1-ylimino)methylamino]-1-(5-phospho-beta-D-ribosyl)imidazole-4-carboxamide + L-glutamine = D-erythro-1-(imidazol-4-yl)glycerol 3-phosphate + 5-amino-1-(5-phospho-beta-D-ribosyl)imidazole-4-carboxamide + L-glutamate + H(+). It functions in the pathway amino-acid biosynthesis; L-histidine biosynthesis; L-histidine from 5-phospho-alpha-D-ribose 1-diphosphate: step 5/9. Its function is as follows. IGPS catalyzes the conversion of PRFAR and glutamine to IGP, AICAR and glutamate. The HisF subunit catalyzes the cyclization activity that produces IGP and AICAR from PRFAR using the ammonia provided by the HisH subunit. This is Imidazole glycerol phosphate synthase subunit HisF from Yersinia pestis (strain Pestoides F).